Reading from the N-terminus, the 371-residue chain is ATP-dependent protease ATP-binding subunit-like protein AmiB (371 aa).

An ATP-binding site is contributed by 96–103 (GPTGVGKT).

Belongs to the ClpX chaperone family. Requires Mg(2+) as cofactor.

In terms of biological role, unlikely to encode a regulatory protein. Has ATPase activity. AmiB and AmiS may act jointly into a two component ABC transporter system. The polypeptide is ATP-dependent protease ATP-binding subunit-like protein AmiB (amiB) (Pseudomonas aeruginosa (strain ATCC 15692 / DSM 22644 / CIP 104116 / JCM 14847 / LMG 12228 / 1C / PRS 101 / PAO1)).